Here is a 494-residue protein sequence, read N- to C-terminus: 4-trimethylaminobutyraldehyde dehydrogenase (494 aa).

Position 2 is an N-acetylserine (Ser-2). Lys-30 is modified (N6-acetyllysine; alternate). The residue at position 30 (Lys-30) is an N6-succinyllysine; alternate. At Lys-59 the chain carries N6-succinyllysine. NAD(+)-binding positions include Lys-180 and 232 to 236 (GSVPT). The active-site Proton acceptor is the Glu-254. Cys-288 (nucleophile) is an active-site residue. N6-acetyllysine is present on residues Lys-298 and Lys-344. An NAD(+)-binding site is contributed by Glu-391.

This sequence belongs to the aldehyde dehydrogenase family. Homotetramer.

The protein resides in the cytoplasm. It is found in the cytosol. It catalyses the reaction 4-(trimethylamino)butanal + NAD(+) + H2O = 4-(trimethylamino)butanoate + NADH + 2 H(+). The catalysed reaction is an aldehyde + NAD(+) + H2O = a carboxylate + NADH + 2 H(+). It carries out the reaction 4-aminobutanal + NAD(+) + H2O = 4-aminobutanoate + NADH + 2 H(+). The enzyme catalyses formaldehyde + NAD(+) + H2O = formate + NADH + 2 H(+). It catalyses the reaction acetaldehyde + NAD(+) + H2O = acetate + NADH + 2 H(+). The catalysed reaction is imidazole-4-acetaldehyde + NAD(+) + H2O = imidazole-4-acetate + NADH + 2 H(+). It carries out the reaction acrolein + NAD(+) + H2O = acrylate + NADH + 2 H(+). The enzyme catalyses (5-hydroxyindol-3-yl)acetaldehyde + NAD(+) + H2O = (5-hydroxyindol-3-yl)acetate + NADH + 2 H(+). It catalyses the reaction 3,4-dihydroxyphenylacetaldehyde + NAD(+) + H2O = 3,4-dihydroxyphenylacetate + NADH + 2 H(+). The catalysed reaction is spermine monoaldehyde + NAD(+) + H2O = N-(2-carboxyethyl)spermidine + NADH + 2 H(+). It carries out the reaction propanal + NAD(+) + H2O = propanoate + NADH + 2 H(+). The enzyme catalyses butanal + NAD(+) + H2O = butanoate + NADH + 2 H(+). It catalyses the reaction pentanal + NAD(+) + H2O = pentanoate + NADH + 2 H(+). The catalysed reaction is hexanal + NAD(+) + H2O = hexanoate + NADH + 2 H(+). The protein operates within amine and polyamine biosynthesis; carnitine biosynthesis. In terms of biological role, converts gamma-trimethylaminobutyraldehyde into gamma-butyrobetaine with high efficiency (in vitro). Can catalyze the irreversible oxidation of a broad range of aldehydes to the corresponding acids in an NAD-dependent reaction, but with low efficiency. Catalyzes the oxidation of aldehydes arising from biogenic amines and polyamines. The polypeptide is 4-trimethylaminobutyraldehyde dehydrogenase (ALDH9A1) (Bos taurus (Bovine)).